A 301-amino-acid chain; its full sequence is Ribosomal protein L11 methyltransferase (301 aa).

Residues threonine 146, glycine 167, aspartate 189, and asparagine 237 each coordinate S-adenosyl-L-methionine.

The protein belongs to the methyltransferase superfamily. PrmA family.

It localises to the cytoplasm. It carries out the reaction L-lysyl-[protein] + 3 S-adenosyl-L-methionine = N(6),N(6),N(6)-trimethyl-L-lysyl-[protein] + 3 S-adenosyl-L-homocysteine + 3 H(+). Its function is as follows. Methylates ribosomal protein L11. The protein is Ribosomal protein L11 methyltransferase of Prochlorococcus marinus (strain MIT 9313).